Consider the following 162-residue polypeptide: Large ribosomal subunit protein uL22c (162 aa).

Belongs to the universal ribosomal protein uL22 family. In terms of assembly, part of the 50S ribosomal subunit.

It localises to the plastid. The protein resides in the chloroplast. Its function is as follows. This protein binds specifically to 23S rRNA. In terms of biological role, the globular domain of the protein is located near the polypeptide exit tunnel on the outside of the subunit, while an extended beta-hairpin is found that lines the wall of the exit tunnel in the center of the 70S ribosome. The polypeptide is Large ribosomal subunit protein uL22c (rpl22) (Cucumis sativus (Cucumber)).